The sequence spans 129 residues: Small ribosomal subunit protein uS11 (129 aa).

The protein belongs to the universal ribosomal protein uS11 family. In terms of assembly, part of the 30S ribosomal subunit. Interacts with proteins S7 and S18. Binds to IF-3.

Its function is as follows. Located on the platform of the 30S subunit, it bridges several disparate RNA helices of the 16S rRNA. Forms part of the Shine-Dalgarno cleft in the 70S ribosome. The chain is Small ribosomal subunit protein uS11 from Bartonella henselae (strain ATCC 49882 / DSM 28221 / CCUG 30454 / Houston 1) (Rochalimaea henselae).